Consider the following 536-residue polypeptide: DEAD-box ATP-dependent RNA helicase 41 (536 aa).

Residues 1–10 (MEQEENHSAD) show a composition bias toward basic and acidic residues. The tract at residues 1 to 25 (MEQEENHSADHLSAQPGNGNELEES) is disordered. The HIT-type zinc finger occupies 40 to 69 (GEPRCVICGRYGEYICDQTDDDICSVECKT). Positions 137-165 (MCFSSSGLPEKLVLNLEAAGYVMPTPVQM) match the Q motif motif. A Helicase ATP-binding domain is found at 168–344 (IPSSICNRSL…NSLAKNAIHI (177 aa)). Residue 181–188 (ADTGSGKT) participates in ATP binding. The DEAD box signature appears at 293-296 (DEVD). Residues 355–518 (SVKQVVIWVE…PIPRELANSK (164 aa)) form the Helicase C-terminal domain.

The protein belongs to the DEAD box helicase family. DDX59 subfamily.

The catalysed reaction is ATP + H2O = ADP + phosphate + H(+). The protein is DEAD-box ATP-dependent RNA helicase 41 of Oryza sativa subsp. japonica (Rice).